Here is a 196-residue protein sequence, read N- to C-terminus: Holliday junction branch migration complex subunit RuvA (196 aa).

The segment at 1 to 69 (MIVGLRGTII…EDAHLLFGFC (69 aa)) is domain I. The segment at 70–148 (EEIEKQTFER…QLLQSQEESI (79 aa)) is domain II. A flexible linker region spans residues 149–157 (APSNNLKYE). Residues 157–196 (EASLALQSLGFKRNEIQKVLEHIEALSVSEIVKEALKRLA) are domain III.

Belongs to the RuvA family. In terms of assembly, homotetramer. Forms an RuvA(8)-RuvB(12)-Holliday junction (HJ) complex. HJ DNA is sandwiched between 2 RuvA tetramers; dsDNA enters through RuvA and exits via RuvB. An RuvB hexamer assembles on each DNA strand where it exits the tetramer. Each RuvB hexamer is contacted by two RuvA subunits (via domain III) on 2 adjacent RuvB subunits; this complex drives branch migration. In the full resolvosome a probable DNA-RuvA(4)-RuvB(12)-RuvC(2) complex forms which resolves the HJ.

It localises to the cytoplasm. Its function is as follows. The RuvA-RuvB-RuvC complex processes Holliday junction (HJ) DNA during genetic recombination and DNA repair, while the RuvA-RuvB complex plays an important role in the rescue of blocked DNA replication forks via replication fork reversal (RFR). RuvA specifically binds to HJ cruciform DNA, conferring on it an open structure. The RuvB hexamer acts as an ATP-dependent pump, pulling dsDNA into and through the RuvAB complex. HJ branch migration allows RuvC to scan DNA until it finds its consensus sequence, where it cleaves and resolves the cruciform DNA. The sequence is that of Holliday junction branch migration complex subunit RuvA from Helicobacter hepaticus (strain ATCC 51449 / 3B1).